Here is a 576-residue protein sequence, read N- to C-terminus: MAGUK p55 subfamily member 7 (576 aa).

2 consecutive L27 domains span residues 10–63 (SDTG…YEKE) and 65–122 (PMPV…YDPV). Positions 139–220 (IIRLVKNREP…AITFKIIPSI (82 aa)) constitute a PDZ domain. One can recognise an SH3 domain in the interval 228–298 (DGKMFVKALF…PSKQFQERRF (71 aa)). Positions 368–560 (YRLVILVGPV…AYNELRSTLE (193 aa)) constitute a Guanylate kinase-like domain.

The protein belongs to the MAGUK family.

Its subcellular location is the membrane. It localises to the cell junction. It is found in the tight junction. The protein resides in the adherens junction. In terms of biological role, acts as an important adapter that promotes epithelial cell polarity and tight junction formation. Involved in the assembly of protein complexes at sites of cell-cell contact. The chain is MAGUK p55 subfamily member 7 (mpp7) from Xenopus tropicalis (Western clawed frog).